An 89-amino-acid chain; its full sequence is Large ribosomal subunit protein bL27 (89 aa).

Residues 1–26 (MAHKKGVGSSRNGRDSESKRLGVKEG) are disordered. Over residues 12–26 (NGRDSESKRLGVKEG) the composition is skewed to basic and acidic residues.

Belongs to the bacterial ribosomal protein bL27 family.

The chain is Large ribosomal subunit protein bL27 from Desulforamulus reducens (strain ATCC BAA-1160 / DSM 100696 / MI-1) (Desulfotomaculum reducens).